The chain runs to 238 residues: MSTYVYGIARSSHPSLPEKMGGIGDPPQPVRILVQGALAALVSDAPEDLRPKRRDLMAHQNVLAEAGAGGAVLPMRFGGISPDDDAVLAVLDEREEHYLERLRALDDKVEYNVKASHDEEAVLHRVLADNPELRGLSEANRAAGGGTYEQKLALGERVAAAVQQREASDAVLIQEALQAEATDVRPGPESGAWLANISFLVERDRADGFVAAIDKLQQANHHLVLQVNGPLPPYSFVE.

The protein belongs to the gas vesicle GvpF/GvpL family. In terms of assembly, binds GvpA.

The protein resides in the gas vesicle. In terms of biological role, a minor component of the gas vesicle, may be involved in preventing GvpA aggregation during gas vesicle nucleation. Gas vesicles are hollow, gas filled proteinaceous nanostructures found in some microorganisms. It is not clear what function gas vesicles perform in soil bacteria. This is Gas vesicle protein F from Streptomyces sp. (strain CB03234).